Reading from the N-terminus, the 422-residue chain is MDYKQFFSNFRYLSSSKGIGGKIKSKPEDFIVREVIPRSVFRSDQCLIYLIKKQNWETMAAIKEIAKRIGIDYKNVGFAGTKDRHAITYQYISICSENLESIKESIASLNIEGISLKFVGRGKPLKLGMLIGNHFQIILRGLEDPERALERTKKILKELKLKGGFPNYFGSQRFGERRVINHEVGKLLLKGDFEGAALKFLGEYTGDMTGDEARKDFLKTGDVEKALEEFPNFLRYERAMLYKYRETRSWKKAFAVLPRPIVRIFIHSYQSYLFNKALSRRIEEGLSLNEALSGDIVCQVKKGLPIRNKTFKVTERSLKFVNERVKRGEAMVTGPVFGFASRLADGPMGKIEREILDEEGIDLNGFKMKQLPILAEAGGRRELLIKPRGFKYKSSEEGLIFRFFLPKGVYATSVMREIMKDH.

The Nucleophile role is filled by Asp83. The region spanning 164–386 is the TRUD domain; it reads GFPNYFGSQR…AGGRRELLIK (223 aa).

This sequence belongs to the pseudouridine synthase TruD family.

It carries out the reaction uridine(13) in tRNA = pseudouridine(13) in tRNA. Functionally, could be responsible for synthesis of pseudouridine from uracil-13 in transfer RNAs. The polypeptide is Probable tRNA pseudouridine synthase D (Thermococcus sibiricus (strain DSM 12597 / MM 739)).